The chain runs to 245 residues: Leucyl/phenylalanyl-tRNA--protein transferase (245 aa).

Belongs to the L/F-transferase family.

It is found in the cytoplasm. It catalyses the reaction N-terminal L-lysyl-[protein] + L-leucyl-tRNA(Leu) = N-terminal L-leucyl-L-lysyl-[protein] + tRNA(Leu) + H(+). The enzyme catalyses N-terminal L-arginyl-[protein] + L-leucyl-tRNA(Leu) = N-terminal L-leucyl-L-arginyl-[protein] + tRNA(Leu) + H(+). It carries out the reaction L-phenylalanyl-tRNA(Phe) + an N-terminal L-alpha-aminoacyl-[protein] = an N-terminal L-phenylalanyl-L-alpha-aminoacyl-[protein] + tRNA(Phe). In terms of biological role, functions in the N-end rule pathway of protein degradation where it conjugates Leu, Phe and, less efficiently, Met from aminoacyl-tRNAs to the N-termini of proteins containing an N-terminal arginine or lysine. The protein is Leucyl/phenylalanyl-tRNA--protein transferase of Paraburkholderia phymatum (strain DSM 17167 / CIP 108236 / LMG 21445 / STM815) (Burkholderia phymatum).